The chain runs to 595 residues: DNA primase (595 aa).

A CHC2-type zinc finger spans residues 38–62 (CPFHQEKTPSFTVSNSKRFFYCFGC). The Toprim domain maps to 250–332 (NHSILVEGYF…EKKISFIRLP (83 aa)). Residues glutamate 256, aspartate 300, and aspartate 302 each contribute to the Mg(2+) site.

It belongs to the DnaG primase family. As to quaternary structure, monomer. Interacts with DnaB. Zn(2+) serves as cofactor. It depends on Mg(2+) as a cofactor.

It catalyses the reaction ssDNA + n NTP = ssDNA/pppN(pN)n-1 hybrid + (n-1) diphosphate.. RNA polymerase that catalyzes the synthesis of short RNA molecules used as primers for DNA polymerase during DNA replication. This is DNA primase from Rickettsia conorii (strain ATCC VR-613 / Malish 7).